Reading from the N-terminus, the 172-residue chain is Adenine phosphoribosyltransferase (172 aa).

The protein belongs to the purine/pyrimidine phosphoribosyltransferase family. Homodimer.

Its subcellular location is the cytoplasm. It carries out the reaction AMP + diphosphate = 5-phospho-alpha-D-ribose 1-diphosphate + adenine. It participates in purine metabolism; AMP biosynthesis via salvage pathway; AMP from adenine: step 1/1. Its function is as follows. Catalyzes a salvage reaction resulting in the formation of AMP, that is energically less costly than de novo synthesis. The protein is Adenine phosphoribosyltransferase of Herpetosiphon aurantiacus (strain ATCC 23779 / DSM 785 / 114-95).